An 805-amino-acid polypeptide reads, in one-letter code: Sucrose synthase (805 aa).

The interval 275-752 (MVFNVVILSP…GLKRIQEKYT (478 aa)) is GT-B glycosyltransferase.

The protein belongs to the glycosyltransferase 1 family. Plant sucrose synthase subfamily.

The catalysed reaction is an NDP-alpha-D-glucose + D-fructose = a ribonucleoside 5'-diphosphate + sucrose + H(+). Functionally, sucrose-cleaving enzyme that provides UDP-glucose and fructose for various metabolic pathways. This is Sucrose synthase from Solanum tuberosum (Potato).